A 367-amino-acid polypeptide reads, in one-letter code: Pepsin A (367 aa).

Positions 1–42 (SIHRVPLKKGKSLRKQLKDHGLLEDFLKKHPYNPASKYHPVL) are cleaved as a propeptide — activation peptide. The Peptidase A1 domain maps to 59–364 (YYGTISIGTP…DRANNKVGLS (306 aa)). Asp-77 is an active-site residue. The cysteines at positions 90 and 95 are disulfide-linked. Asn-113 carries an N-linked (GlcNAc...) asparagine glycan. The cysteines at positions 251 and 255 are disulfide-linked. Residue Asp-260 is part of the active site. Cys-290 and Cys-323 are joined by a disulfide.

It belongs to the peptidase A1 family.

The enzyme catalyses Preferential cleavage: hydrophobic, preferably aromatic, residues in P1 and P1' positions. Cleaves 1-Phe-|-Val-2, 4-Gln-|-His-5, 13-Glu-|-Ala-14, 14-Ala-|-Leu-15, 15-Leu-|-Tyr-16, 16-Tyr-|-Leu-17, 23-Gly-|-Phe-24, 24-Phe-|-Phe-25 and 25-Phe-|-Tyr-26 bonds in the B chain of insulin.. Shows particularly broad specificity; although bonds involving phenylalanine and leucine are preferred, many others are also cleaved to some extent. The sequence is that of Pepsin A (PGA) from Gallus gallus (Chicken).